A 259-amino-acid chain; its full sequence is AM-toxin biosynthesis protein 11 (259 aa).

A disordered region spans residues 39–66; that stretch reads RRSRRRPEEESIQSLSKHVSTTTQPCPT. Over residues 50–64 the composition is skewed to polar residues; it reads IQSLSKHVSTTTQPC.

Its pathway is mycotoxin biosynthesis. Functionally, part of the gene clusters that mediate the biosynthesis of AM-toxins, host-selective toxins (HSTs) causing Alternaria blotch on apple, a worldwide distributed disease. AM-toxins are cyclic depsipeptides containing the 3 residues 2-hydroxy-isovaleric acid (2-HIV), dehydroalanine, L-alanine which are common for all 3 AM-toxins I to III. The fourth precursor is L-alpha-amino-methoxyphenyl-valeric acid (L-Amv) for AM-toxin I, L-alpha-amino-phenyl-valeric acid (L-Apv) for AM-toxin II, and L-alpha-amino-hydroxyphenyl-valeric acid (L-Ahv) for AM-toxin III. AM-toxins have two target sites for affecting susceptible apple cells; they cause invagination of the plasma membrane and electrolyte loss and chloroplast disorganization. The non-ribosomal peptide synthetase AMT1 contains 4 catalytic modules and is responsible for activation of each residue in AM-toxin. The aldo-keto reductase AMT2 catalyzes the conversion of 2-keto-isovaleric acid (2-KIV) to 2-hydroxy-isovaleric acid (2-HIV), one of the precursor residues incorporated by AMT1 during AM-toxin biosynthesis, by reduction of its ketone to an alcohol. The cytochrome P450 monooxygenase AMT3 and the thioesterase AMT4 are also important for AM-toxin production, but their exact function within the AM-toxin biosynthesis are not known yet. Up to 21 proteins (including AMT1 to AMT4) are predicted to be involved in AM-toxin biosynthesis since their expression ishighly up-regulated in AM-toxin-producing cultures. The chain is AM-toxin biosynthesis protein 11 from Alternaria alternata (Alternaria rot fungus).